The sequence spans 408 residues: Serine/threonine transporter SstT (408 aa).

9 consecutive transmembrane segments (helical) span residues 11–31 (LANG…VALA), 43–63 (FLGS…VFIL), 82–102 (IVVL…ILSM), 141–161 (ALMT…GLAL), 192–212 (IGIF…AIAG), 216–236 (LLAV…PLIV), 290–310 (IPLG…VLTL), 316–336 (LGIQ…AISA), and 363–383 (VAMQ…AAET).

It belongs to the dicarboxylate/amino acid:cation symporter (DAACS) (TC 2.A.23) family.

Its subcellular location is the cell inner membrane. It catalyses the reaction L-serine(in) + Na(+)(in) = L-serine(out) + Na(+)(out). It carries out the reaction L-threonine(in) + Na(+)(in) = L-threonine(out) + Na(+)(out). Its function is as follows. Involved in the import of serine and threonine into the cell, with the concomitant import of sodium (symport system). The chain is Serine/threonine transporter SstT from Shewanella oneidensis (strain ATCC 700550 / JCM 31522 / CIP 106686 / LMG 19005 / NCIMB 14063 / MR-1).